A 560-amino-acid polypeptide reads, in one-letter code: Potassium-transporting ATPase potassium-binding subunit (560 aa).

12 consecutive transmembrane segments (helical) span residues 6 to 26 (FLLI…LGSL), 63 to 83 (LLAI…ILMC), 132 to 152 (GLAV…FALI), 175 to 195 (LWVL…QGAI), 250 to 270 (LTNV…CFAF), 282 to 302 (AILW…MWAE), 327 to 347 (FGIL…CGAV), 356 to 376 (ALGG…FGGV), 379 to 399 (GLYG…LMIG), 416 to 436 (MTAL…ALAM), 483 to 503 (LLLA…VMAI), and 524 to 544 (GALF…LTFI).

It belongs to the KdpA family. The system is composed of three essential subunits: KdpA, KdpB and KdpC.

It is found in the cell inner membrane. Functionally, part of the high-affinity ATP-driven potassium transport (or Kdp) system, which catalyzes the hydrolysis of ATP coupled with the electrogenic transport of potassium into the cytoplasm. This subunit binds the periplasmic potassium ions and delivers the ions to the membrane domain of KdpB through an intramembrane tunnel. This chain is Potassium-transporting ATPase potassium-binding subunit, found in Cronobacter sakazakii (strain ATCC BAA-894) (Enterobacter sakazakii).